Reading from the N-terminus, the 311-residue chain is Olfactory receptor 2Y1 (311 aa).

Residues 1 to 25 are Extracellular-facing; the sequence is MGSFNTSFEDGFILVGFSDWPQLEP. N-linked (GlcNAc...) asparagine glycosylation occurs at asparagine 5. Residues 26–49 traverse the membrane as a helical segment; the sequence is ILFVFIFIFYSLTLFGNTIIIALS. Over 50–57 the chain is Cytoplasmic; that stretch reads WLDLRLHT. A helical membrane pass occupies residues 58–79; that stretch reads PMYFFLSHLSLLDLCFTTSTVP. Over 80-100 the chain is Extracellular; it reads QLLINLCGVDRTITRGGCVAQ. Cysteine 97 and cysteine 188 form a disulfide bridge. A helical membrane pass occupies residues 101-120; sequence LFIYLALGSTECVLLVVMAF. Topologically, residues 121–139 are cytoplasmic; it reads DRYAAVCRPLHYMAIMHPH. A helical transmembrane segment spans residues 140 to 158; that stretch reads LCQTLAIASWGAGFVNSLI. Over 159–194 the chain is Extracellular; that stretch reads QTGLAMAMPLCGHRLNHFFCEMPVFLKLACADTEGT. The helical transmembrane segment at 195-218 threads the bilayer; sequence EAKMFVARVIVVAVPAALILGSYV. At 219–235 the chain is on the cytoplasmic side; it reads HIAHAVLRVKSTAGRRK. The chain crosses the membrane as a helical span at residues 236 to 258; that stretch reads AFGTCGSHLLVVFLFYGSAIYTY. Residues 259-271 are Extracellular-facing; sequence LQSIHNYSEREGK. N-linked (GlcNAc...) asparagine glycosylation occurs at asparagine 264. A helical membrane pass occupies residues 272-291; it reads FVALFYTIITPILNPLIYTL. Residues 292–311 lie on the Cytoplasmic side of the membrane; that stretch reads RNKDVKGALWKVLWRGRDSG.

This sequence belongs to the G-protein coupled receptor 1 family.

Its subcellular location is the cell membrane. Functionally, odorant receptor. The protein is Olfactory receptor 2Y1 (OR2Y1) of Homo sapiens (Human).